The primary structure comprises 456 residues: N(6)-adenosine-methyltransferase non-catalytic subunit METTL14 (456 aa).

The disordered stretch occupies residues 45–76 (AETRETCRASYDTSAPNAKRKYQDEGETDEDK). Interaction with METTL3 regions lie at residues 135 to 136 (RD) and 237 to 238 (SG). The positively charged region required for RNA-binding stretch occupies residues 245-254 (RVCLRKWGYR). Interaction with METTL3 stretches follow at residues 255–258 (RCED) and 278–287 (KAVFQRTKEH). Positions 297-298 (KR) are positively charged region required for RNA-binding. Positions 308–312 (NVDID) are interaction with METTL3. The tract at residues 393–456 (ERLRPKSPPP…GAHRGGFPPR (64 aa)) is disordered. S399 carries the phosphoserine modification. Positions 409-423 (GGGAPRGGGRGGTSA) are enriched in gly residues. Residues 425-440 (RGRERNRSNFRGERGG) are compositionally biased toward basic and acidic residues. Positions 441–450 (FRGGRGGAHR) are enriched in gly residues.

It belongs to the MT-A70-like family. Heterodimer; heterodimerizes with METTL3 to form an antiparallel heterodimer that constitutes an active methyltransferase. Component of the WMM complex, a N6-methyltransferase complex composed of a catalytic subcomplex, named MAC, and of an associated subcomplex, named MACOM. The MAC subcomplex is composed of METTL3 and METTL14. The MACOM subcomplex is composed of WTAP, ZC3H13, CBLL1/HAKAI, VIRMA, and, in some cases of RBM15 (RBM15 or RBM15B).

Its subcellular location is the nucleus. Functionally, the METTL3-METTL14 heterodimer forms a N6-methyltransferase complex that methylates adenosine residues at the N(6) position of some mRNAs and regulates the circadian clock, differentiation of embryonic stem cells and cortical neurogenesis. In the heterodimer formed with METTL3, METTL14 constitutes the RNA-binding scaffold that recognizes the substrate rather than the catalytic core. N6-methyladenosine (m6A), which takes place at the 5'-[AG]GAC-3' consensus sites of some mRNAs, plays a role in mRNA stability and processing. M6A acts as a key regulator of mRNA stability by promoting mRNA destabilization and degradation. In embryonic stem cells (ESCs), m6A methylation of mRNAs encoding key naive pluripotency-promoting transcripts results in transcript destabilization. M6A regulates spermatogonial differentiation and meiosis and is essential for male fertility and spermatogenesis. M6A also regulates cortical neurogenesis: m6A methylation of transcripts related to transcription factors, neural stem cells, the cell cycle and neuronal differentiation during brain development promotes their destabilization and decay, promoting differentiation of radial glial cells. The protein is N(6)-adenosine-methyltransferase non-catalytic subunit METTL14 (METTL14) of Bos taurus (Bovine).